A 94-amino-acid polypeptide reads, in one-letter code: (2R)-sulfolactate sulfo-lyase subunit alpha (94 aa).

An AFP-like domain is found at 16 to 90 (VVVVEGVEAG…GEHVHVHNVK (75 aa)).

(2R)-sulfolactate sulfo-lyase is composed of a SuyA and a SuyB subunit.

The protein localises to the cytoplasm. It catalyses the reaction (2R)-3-sulfolactate = sulfite + pyruvate + H(+). Its function is as follows. Together with SuyB, desulfonates sulfolactate to pyruvate and sulfite. This chain is (2R)-sulfolactate sulfo-lyase subunit alpha (suyA), found in Chromohalobacter salexigens (strain ATCC BAA-138 / DSM 3043 / CIP 106854 / NCIMB 13768 / 1H11).